A 391-amino-acid chain; its full sequence is ATP phosphoribosyltransferase regulatory subunit (391 aa).

The protein belongs to the class-II aminoacyl-tRNA synthetase family. HisZ subfamily. In terms of assembly, heteromultimer composed of HisG and HisZ subunits.

Its subcellular location is the cytoplasm. It functions in the pathway amino-acid biosynthesis; L-histidine biosynthesis; L-histidine from 5-phospho-alpha-D-ribose 1-diphosphate: step 1/9. Required for the first step of histidine biosynthesis. May allow the feedback regulation of ATP phosphoribosyltransferase activity by histidine. This is ATP phosphoribosyltransferase regulatory subunit from Prochlorococcus marinus (strain NATL1A).